Consider the following 1946-residue polypeptide: 1,3-beta-glucan synthase component (1946 aa).

Disordered stretches follow at residues 1–127 and 152–198; these read MSGY…FSDF and YGEG…KEPY. Low complexity-rich tracts occupy residues 24–34, 43–60, and 91–109; these read GYYQDDQYYDQ, GDHA…QGDG, and DDYY…NQGY. Polar residues predominate over residues 165 to 180; it reads QLSYGGNRSSGASTPN. Asn-171 and Asn-290 each carry an N-linked (GlcNAc...) asparagine glycan. Residues 297 to 316 form a disordered region; that stretch reads KRKAKKGKKKGGEAGNEAET. Helical transmembrane passes span 489 to 509, 537 to 557, 576 to 596, 618 to 638, 675 to 695, and 734 to 754; these read WFHL…MFWF, FSIV…ATLA, LLFL…VFMF, IGIV…VMPL, FGLW…YLTL, and IVLI…TYLF. N-linked (GlcNAc...) asparagine glycans are attached at residues Asn-1017 and Asn-1312. The next 5 membrane-spanning stretches (helical) occupy residues 1356–1376, 1413–1433, 1500–1520, 1523–1543, and 1615–1635; these read NMFI…IGAL, CIIS…VQEL, FAGQ…FATS, WQPA…SPFL, and IFLT…VAYL. N-linked (GlcNAc...) asparagine glycosylation occurs at Asn-1649. Transmembrane regions (helical) follow at residues 1667–1687, 1703–1723, 1738–1758, 1803–1823, and 1864–1884; these read LAVV…AMFG, FGPV…IIFF, LAGI…IVSL, FSAD…LILI, and AILY…PGVI. N-linked (GlcNAc...) asparagine glycosylation is present at Asn-1918. Residues 1920–1946 are disordered; sequence TEGKTETGTKAGGADASATDASKLRLF. Residues 1925 to 1940 show a composition bias toward low complexity; that stretch reads ETGTKAGGADASATDA.

The protein belongs to the glycosyltransferase 48 family. As to quaternary structure, component of the 1,3-beta-glucan synthase (GS) complex composed of a catalytic subunit GLS1 and a regulatory subunit RHO1.

The protein localises to the membrane. It is found in the cell membrane. It catalyses the reaction [(1-&gt;3)-beta-D-glucosyl](n) + UDP-alpha-D-glucose = [(1-&gt;3)-beta-D-glucosyl](n+1) + UDP + H(+). With respect to regulation, activated by iron ions. Inhibited by manganese, copper and zinc ions. In terms of biological role, catalytic subunit of the 1,3-beta-glucan synthase (GS). Synthesizes 1,3-beta-glucan, a major structural component of the fungal cell wall. Involved in cell wall synthesis, maintenance and remodeling. In Cordyceps militaris (strain CM01) (Caterpillar fungus), this protein is 1,3-beta-glucan synthase component.